Consider the following 468-residue polypeptide: Protein phosphatase ppm-1.A (468 aa).

A disordered region spans residues 1–23; that stretch reads MTISRADLQIASSAEPKTHGNLN. The PPM-type phosphatase domain maps to 106–381; it reads RYGMSSMQGW…DNMTMVVVCF (276 aa). Residues aspartate 145, glycine 146, aspartate 329, and aspartate 372 each contribute to the Mn(2+) site.

This sequence belongs to the PP2C family. Mg(2+) is required as a cofactor. Requires Mn(2+) as cofactor. As to expression, expressed in neurons of the nerve ring and motor neurons of the ventral nerve cord.

It localises to the synapse. It catalyses the reaction O-phospho-L-seryl-[protein] + H2O = L-seryl-[protein] + phosphate. The catalysed reaction is O-phospho-L-threonyl-[protein] + H2O = L-threonyl-[protein] + phosphate. In terms of biological role, probable phosphatase which regulates axon termination in ALM and PLM neurons, and synaptic branch extension and/or stabilization in PLM neurons. Plays a role in synapse formation in GABAergic DD motor neurons probably by dephosphorylating pmk-3 thereby negatively regulating a MAP kinase pathway that includes dlk-1, mkk-4 and pmk-3. In Caenorhabditis elegans, this protein is Protein phosphatase ppm-1.A.